The sequence spans 304 residues: MQQADLIKRIQELKVKRNAVILSHYYSRPEVQDIADFVGDSLALSQEAVRQDADVIVFCGVHFMGESAAILSPKKTVLLPEIDSTCPMADMVDVEGLKRLKEKHPEAPVVSYVNSSAAIKAESYICCTSANAVEVVNSLDVDEVIFVPDKNLAAYVASRTDKKIIPWEGHCPTHHQILREDVLKMKEKHPLAKFIAHPECRPDVLELADHVASTRGMIMYAKNSPAREFIIGTECGLIHGLHKAAPEKTYYCISEFACCPSMKMVNLEKLLASLEKMQHVVTVPEEVRVRAKEALDRMLAVKVK.

Iminosuccinate is bound by residues histidine 24 and serine 41. A [4Fe-4S] cluster-binding site is contributed by cysteine 86. Iminosuccinate is bound by residues 112 to 114 and serine 129; that span reads YVN. Cysteine 171 provides a ligand contact to [4Fe-4S] cluster. Residues 197 to 199 and threonine 214 each bind iminosuccinate; that span reads HPE. Cysteine 259 contributes to the [4Fe-4S] cluster binding site.

Belongs to the quinolinate synthase family. Type 2 subfamily. It depends on [4Fe-4S] cluster as a cofactor.

It localises to the cytoplasm. The enzyme catalyses iminosuccinate + dihydroxyacetone phosphate = quinolinate + phosphate + 2 H2O + H(+). Its pathway is cofactor biosynthesis; NAD(+) biosynthesis; quinolinate from iminoaspartate: step 1/1. Functionally, catalyzes the condensation of iminoaspartate with dihydroxyacetone phosphate to form quinolinate. The protein is Quinolinate synthase 1 of Methanosarcina acetivorans (strain ATCC 35395 / DSM 2834 / JCM 12185 / C2A).